The following is a 462-amino-acid chain: Glutamate-1-semialdehyde 2,1-aminomutase (462 aa).

Residues 178-200 (DDPQRPASPRSQSSRGLPSSPGV) are disordered. Over residues 182 to 192 (RPASPRSQSSR) the composition is skewed to low complexity. The residue at position 297 (Lys-297) is an N6-(pyridoxal phosphate)lysine.

This sequence belongs to the class-III pyridoxal-phosphate-dependent aminotransferase family. HemL subfamily. In terms of assembly, homodimer. Pyridoxal 5'-phosphate serves as cofactor.

It is found in the cytoplasm. It carries out the reaction (S)-4-amino-5-oxopentanoate = 5-aminolevulinate. Its pathway is porphyrin-containing compound metabolism; protoporphyrin-IX biosynthesis; 5-aminolevulinate from L-glutamyl-tRNA(Glu): step 2/2. The polypeptide is Glutamate-1-semialdehyde 2,1-aminomutase (hemL) (Mycobacterium bovis (strain ATCC BAA-935 / AF2122/97)).